Here is a 530-residue protein sequence, read N- to C-terminus: Ubiquitin carboxyl-terminal hydrolase 17 (530 aa).

The USP domain occupies 80-375; it reads AGLQNMGNTC…QAYVLFYIQK (296 aa). The active-site Nucleophile is the Cys-89. His-334 functions as the Proton acceptor in the catalytic mechanism. Basic and acidic residues-rich tracts occupy residues 382 to 392 and 398 to 413; these read SESVSRGREPR and DTDR…RDHP. Disordered regions lie at residues 382–416 and 490–530; these read SESV…PCLQ and SSTT…LVCQ. The interval 399–530 is mediates interaction with SUDS3; sequence TDRRATQGEL…HSKRALLVCQ (132 aa). The segment covering 498-510 has biased composition (polar residues); sequence ESVNTGTLASLQG. A compositionally biased stretch (basic residues) spans 511–524; it reads RTRRSKGKNKHSKR.

The protein belongs to the peptidase C19 family. USP17 subfamily. In terms of assembly, interacts with SUDS3; the interaction is direct. Broadly expressed.

It is found in the nucleus. Its subcellular location is the endoplasmic reticulum. The catalysed reaction is Thiol-dependent hydrolysis of ester, thioester, amide, peptide and isopeptide bonds formed by the C-terminal Gly of ubiquitin (a 76-residue protein attached to proteins as an intracellular targeting signal).. Its function is as follows. Deubiquitinating enzyme that removes conjugated ubiquitin from specific proteins to regulate different cellular processes. Regulates cell proliferation by deubiquitinating and inhibiting RCE1 thereby controlling the small GTPases NRAS and HRAS localization and activation. In parallel, mediates deubiquitination of CDC25A, preventing CDC25A degradation by the proteasome during the G1/S and G2/M phases promoting cell-cycle progression. Also regulates cell proliferation and apoptosis through deubiquitination of SUDS3 a regulator of histone deacetylation. Through activation of the Rho family GTPases RAC1A, CDC42 and RHOA, regulates cell migration. Through the cleavage of 'Lys-48'- and 'Lys-63'-linked polyubiquitin chains of the cytoplasmic innate immune receptors RIGI and IFIH1 stimulates the cellular response to viral infection. The chain is Ubiquitin carboxyl-terminal hydrolase 17 (USP17L2) from Homo sapiens (Human).